Consider the following 193-residue polypeptide: UPF0301 protein Fphi_1754 (193 aa).

The protein belongs to the UPF0301 (AlgH) family.

The chain is UPF0301 protein Fphi_1754 from Francisella philomiragia subsp. philomiragia (strain ATCC 25017 / CCUG 19701 / FSC 153 / O#319-036).